Here is an 82-residue protein sequence, read N- to C-terminus: ATP synthase subunit c, chloroplastic (82 aa).

Methionine 1 is subject to N-formylmethionine. The next 2 helical transmembrane spans lie at 3–23 and 57–77; these read PIVAATSVVSAGLAVGLAAIG and FAFMESLTIYGLVVALALLFA.

It belongs to the ATPase C chain family. In terms of assembly, F-type ATPases have 2 components, F(1) - the catalytic core - and F(0) - the membrane proton channel. F(1) has five subunits: alpha(3), beta(3), gamma(1), delta(1), epsilon(1). F(0) has four main subunits: a(1), b(1), b'(1) and c(10-14). The alpha and beta chains form an alternating ring which encloses part of the gamma chain. F(1) is attached to F(0) by a central stalk formed by the gamma and epsilon chains, while a peripheral stalk is formed by the delta, b and b' chains.

The protein localises to the plastid. The protein resides in the chloroplast thylakoid membrane. F(1)F(0) ATP synthase produces ATP from ADP in the presence of a proton or sodium gradient. F-type ATPases consist of two structural domains, F(1) containing the extramembraneous catalytic core and F(0) containing the membrane proton channel, linked together by a central stalk and a peripheral stalk. During catalysis, ATP synthesis in the catalytic domain of F(1) is coupled via a rotary mechanism of the central stalk subunits to proton translocation. Functionally, key component of the F(0) channel; it plays a direct role in translocation across the membrane. A homomeric c-ring of between 10-14 subunits forms the central stalk rotor element with the F(1) delta and epsilon subunits. The protein is ATP synthase subunit c, chloroplastic of Chlamydomonas reinhardtii (Chlamydomonas smithii).